The primary structure comprises 295 residues: Cytidine deaminase (295 aa).

2 CMP/dCMP-type deaminase domains span residues 48 to 168 and 187 to 295; these read TDNQ…FGPS and EDDD…YLSL. 89–91 provides a ligand contact to substrate; that stretch reads NME. H102 lines the Zn(2+) pocket. E104 (proton donor) is an active-site residue. 2 residues coordinate Zn(2+): C129 and C132.

Belongs to the cytidine and deoxycytidylate deaminase family. Homodimer. It depends on Zn(2+) as a cofactor.

It catalyses the reaction cytidine + H2O + H(+) = uridine + NH4(+). The catalysed reaction is 2'-deoxycytidine + H2O + H(+) = 2'-deoxyuridine + NH4(+). Functionally, this enzyme scavenges exogenous and endogenous cytidine and 2'-deoxycytidine for UMP synthesis. This is Cytidine deaminase from Vibrio vulnificus (strain YJ016).